Consider the following 562-residue polypeptide: MFS-type efflux pump elcC (562 aa).

11 helical membrane passes run 50–70 (WVFL…GAAP), 80–100 (VVAG…VAEF), 111–131 (GMLG…GGAF), 139–159 (LCFY…FLLV), 184–204 (LYGL…TQWG), 215–235 (IIAL…IEIW), 257–277 (IFSF…PLWF), 288–308 (SGIH…AAGG), 309–329 (MVFG…LAAV), 351–371 (VLYG…IQAA), and 383–403 (VVIF…QNVF). An N-linked (GlcNAc...) asparagine glycan is attached at Asn448. The chain crosses the membrane as a helical span at residues 455-475 (FYVAVATAGLSMAGSILIPWL). Residues 515–562 (EIASEDSQSSDIEKVPRNNEVSTYDSQTSEVEKSSVGSTNRKVESIRN) are disordered. The segment covering 533 to 554 (NEVSTYDSQTSEVEKSSVGSTN) has biased composition (polar residues).

The protein belongs to the major facilitator superfamily. TCR/Tet family.

The protein localises to the cell membrane. Its function is as follows. MFS-type efflux pump; part of the gene cluster that mediates the biosynthesis of elsinochrome C, a perelyenequinone phytotoxin structurally similar to cercosporin. The chain is MFS-type efflux pump elcC from Phaeosphaeria nodorum (strain SN15 / ATCC MYA-4574 / FGSC 10173) (Glume blotch fungus).